The chain runs to 335 residues: Phospho-N-acetylmuramoyl-pentapeptide-transferase (335 aa).

Transmembrane regions (helical) follow at residues 3–23, 53–73, 78–98, 118–138, 143–163, 175–195, 200–220, 226–246, 251–271, and 314–334; these read LTLI…PHFI, GGTV…ILFF, SMGL…IGFL, LSLQ…PSGI, VFGF…FWVV, IDGL…VIAI, YDVL…FIFN, VFMG…ISIA, WTLL…MLQV, and VDAF…AILY.

The protein belongs to the glycosyltransferase 4 family. MraY subfamily. Requires Mg(2+) as cofactor.

It is found in the cell membrane. It catalyses the reaction UDP-N-acetyl-alpha-D-muramoyl-L-alanyl-gamma-D-glutamyl-L-lysyl-D-alanyl-D-alanine + di-trans,octa-cis-undecaprenyl phosphate = Mur2Ac(oyl-L-Ala-gamma-D-Glu-L-Lys-D-Ala-D-Ala)-di-trans,octa-cis-undecaprenyl diphosphate + UMP. The protein operates within cell wall biogenesis; peptidoglycan biosynthesis. Catalyzes the initial step of the lipid cycle reactions in the biosynthesis of the cell wall peptidoglycan: transfers peptidoglycan precursor phospho-MurNAc-pentapeptide from UDP-MurNAc-pentapeptide onto the lipid carrier undecaprenyl phosphate, yielding undecaprenyl-pyrophosphoryl-MurNAc-pentapeptide, known as lipid I. This Streptococcus uberis (strain ATCC BAA-854 / 0140J) protein is Phospho-N-acetylmuramoyl-pentapeptide-transferase.